Reading from the N-terminus, the 275-residue chain is Rhamnulose-1-phosphate aldolase (275 aa).

Glutamate 117 is an active-site residue. 3 residues coordinate Zn(2+): histidine 141, histidine 143, and histidine 212.

The protein belongs to the aldolase class II family. RhaD subfamily. In terms of assembly, homotetramer. The cofactor is Zn(2+).

The protein resides in the cytoplasm. It catalyses the reaction L-rhamnulose 1-phosphate = (S)-lactaldehyde + dihydroxyacetone phosphate. It participates in carbohydrate degradation; L-rhamnose degradation; glycerone phosphate from L-rhamnose: step 3/3. Catalyzes the reversible cleavage of L-rhamnulose-1-phosphate to dihydroxyacetone phosphate (DHAP) and L-lactaldehyde. This chain is Rhamnulose-1-phosphate aldolase, found in Salmonella heidelberg (strain SL476).